The primary structure comprises 89 residues: Small ribosomal subunit protein uS15 (89 aa).

It belongs to the universal ribosomal protein uS15 family. Part of the 30S ribosomal subunit. Forms a bridge to the 50S subunit in the 70S ribosome, contacting the 23S rRNA.

In terms of biological role, one of the primary rRNA binding proteins, it binds directly to 16S rRNA where it helps nucleate assembly of the platform of the 30S subunit by binding and bridging several RNA helices of the 16S rRNA. Forms an intersubunit bridge (bridge B4) with the 23S rRNA of the 50S subunit in the ribosome. This Acinetobacter baumannii (strain AB307-0294) protein is Small ribosomal subunit protein uS15.